Reading from the N-terminus, the 236-residue chain is uncharacterized protein (236 aa).

This sequence to M.tuberculosis Rv2557.

This is an uncharacterized protein from Mycobacterium tuberculosis (strain CDC 1551 / Oshkosh).